The sequence spans 505 residues: ATP synthase subunit alpha (505 aa).

Residue 170 to 177 participates in ATP binding; that stretch reads GDRQTGKT.

It belongs to the ATPase alpha/beta chains family. F-type ATPases have 2 components, CF(1) - the catalytic core - and CF(0) - the membrane proton channel. CF(1) has five subunits: alpha(3), beta(3), gamma(1), delta(1), epsilon(1). CF(0) has four main subunits: a, b, b' and c.

It is found in the cellular thylakoid membrane. The catalysed reaction is ATP + H2O + 4 H(+)(in) = ADP + phosphate + 5 H(+)(out). Its function is as follows. Produces ATP from ADP in the presence of a proton gradient across the membrane. The alpha chain is a regulatory subunit. In Cyanothece sp. (strain PCC 7425 / ATCC 29141), this protein is ATP synthase subunit alpha.